We begin with the raw amino-acid sequence, 233 residues long: Phosphoribosylaminoimidazole-succinocarboxamide synthase (233 aa).

It belongs to the SAICAR synthetase family.

The enzyme catalyses 5-amino-1-(5-phospho-D-ribosyl)imidazole-4-carboxylate + L-aspartate + ATP = (2S)-2-[5-amino-1-(5-phospho-beta-D-ribosyl)imidazole-4-carboxamido]succinate + ADP + phosphate + 2 H(+). It functions in the pathway purine metabolism; IMP biosynthesis via de novo pathway; 5-amino-1-(5-phospho-D-ribosyl)imidazole-4-carboxamide from 5-amino-1-(5-phospho-D-ribosyl)imidazole-4-carboxylate: step 1/2. This chain is Phosphoribosylaminoimidazole-succinocarboxamide synthase, found in Staphylococcus saprophyticus subsp. saprophyticus (strain ATCC 15305 / DSM 20229 / NCIMB 8711 / NCTC 7292 / S-41).